Here is a 288-residue protein sequence, read N- to C-terminus: Thiamine-monophosphate kinase (288 aa).

The Mg(2+) site is built by Asp-20, Thr-30, and Asp-32. Asp-39 provides a ligand contact to substrate. 2 residues coordinate Mg(2+): Asp-60 and Asp-107. ATP contacts are provided by residues 106–107 (GD) and Arg-130. A Mg(2+)-binding site is contributed by Asp-188. Ser-190 provides a ligand contact to ATP. Residue Asp-191 participates in Mg(2+) binding. Trp-286 is a binding site for substrate.

Belongs to the thiamine-monophosphate kinase family.

It carries out the reaction thiamine phosphate + ATP = thiamine diphosphate + ADP. It participates in cofactor biosynthesis; thiamine diphosphate biosynthesis; thiamine diphosphate from thiamine phosphate: step 1/1. Functionally, catalyzes the ATP-dependent phosphorylation of thiamine-monophosphate (TMP) to form thiamine-pyrophosphate (TPP), the active form of vitamin B1. This chain is Thiamine-monophosphate kinase, found in Halobacterium salinarum (strain ATCC 700922 / JCM 11081 / NRC-1) (Halobacterium halobium).